Consider the following 127-residue polypeptide: Large ribosomal subunit protein uL24 (127 aa).

The protein belongs to the universal ribosomal protein uL24 family. Component of the large ribosomal subunit. Mature ribosomes consist of a small (40S) and a large (60S) subunit. The 40S subunit contains about 32 different proteins and 1 molecule of RNA (18S). The 60S subunit contains 45 different proteins and 3 molecules of RNA (25S, 5.8S and 5S).

Its subcellular location is the cytoplasm. In terms of biological role, component of the ribosome, a large ribonucleoprotein complex responsible for the synthesis of proteins in the cell. The small ribosomal subunit (SSU) binds messenger RNAs (mRNAs) and translates the encoded message by selecting cognate aminoacyl-transfer RNA (tRNA) molecules. The large subunit (LSU) contains the ribosomal catalytic site termed the peptidyl transferase center (PTC), which catalyzes the formation of peptide bonds, thereby polymerizing the amino acids delivered by tRNAs into a polypeptide chain. The nascent polypeptides leave the ribosome through a tunnel in the LSU and interact with protein factors that function in enzymatic processing, targeting, and the membrane insertion of nascent chains at the exit of the ribosomal tunnel. This Candida albicans (strain SC5314 / ATCC MYA-2876) (Yeast) protein is Large ribosomal subunit protein uL24.